A 286-amino-acid chain; its full sequence is Thymidylate synthase (286 aa).

Residues R21 and 136-137 each bind dUMP; that span reads RR. C156 (nucleophile) is an active-site residue. Residues 176 to 179, N187, and 217 to 219 each bind dUMP; these read RSVD and HIY. D179 lines the (6R)-5,10-methylene-5,6,7,8-tetrahydrofolate pocket. A285 provides a ligand contact to (6R)-5,10-methylene-5,6,7,8-tetrahydrofolate.

This sequence belongs to the thymidylate synthase family. In terms of assembly, homodimer.

The catalysed reaction is dUMP + (6R)-5,10-methylene-5,6,7,8-tetrahydrofolate = 7,8-dihydrofolate + dTMP. It functions in the pathway pyrimidine metabolism; dTTP biosynthesis. The chain is Thymidylate synthase (TD) from Enterobacteria phage T4 (Bacteriophage T4).